A 184-amino-acid polypeptide reads, in one-letter code: Photosystem I assembly protein Ycf4 (184 aa).

2 consecutive transmembrane segments (helical) span residues 22–42 (FCWAFILFLGSLGFLLVGTSS) and 57–77 (IIFFPQGIVMSFYGIAGLFIS).

Belongs to the Ycf4 family.

Its subcellular location is the plastid. The protein resides in the chloroplast thylakoid membrane. Seems to be required for the assembly of the photosystem I complex. The protein is Photosystem I assembly protein Ycf4 of Draba nemorosa (Woodland whitlowgrass).